A 366-amino-acid chain; its full sequence is NADH-quinone oxidoreductase subunit D (366 aa).

The protein belongs to the complex I 49 kDa subunit family. As to quaternary structure, NDH-1 is composed of 14 different subunits. Subunits NuoB, C, D, E, F, and G constitute the peripheral sector of the complex.

The protein localises to the cell membrane. The catalysed reaction is a quinone + NADH + 5 H(+)(in) = a quinol + NAD(+) + 4 H(+)(out). Functionally, NDH-1 shuttles electrons from NADH, via FMN and iron-sulfur (Fe-S) centers, to quinones in the respiratory chain. The immediate electron acceptor for the enzyme in this species is believed to be a menaquinone. Couples the redox reaction to proton translocation (for every two electrons transferred, four hydrogen ions are translocated across the cytoplasmic membrane), and thus conserves the redox energy in a proton gradient. This is NADH-quinone oxidoreductase subunit D from Bacillus mycoides (strain KBAB4) (Bacillus weihenstephanensis).